The sequence spans 233 residues: uncharacterized protein (233 aa).

Residues H64, H66, D68, H69, H143, D162, and H212 each coordinate Zn(2+).

This sequence belongs to the metallo-beta-lactamase superfamily. Glyoxalase II family. It depends on Zn(2+) as a cofactor.

This is an uncharacterized protein from Bacillus subtilis (strain 168).